We begin with the raw amino-acid sequence, 721 residues long: Glucans biosynthesis glucosyltransferase H (721 aa).

The next 7 membrane-spanning stretches (helical) occupy residues 54 to 74, 85 to 105, 404 to 424, 458 to 478, 493 to 513, 548 to 568, and 569 to 589; these read LIMV…YQVL, VVLV…VSAL, GIGA…GILI, FAGT…LVLI, FGGV…MMVF, YALP…VSWP, and LLLW…VALL.

It belongs to the glycosyltransferase 2 family. OpgH subfamily.

The protein resides in the cell inner membrane. Its pathway is glycan metabolism; osmoregulated periplasmic glucan (OPG) biosynthesis. In terms of biological role, involved in the biosynthesis of osmoregulated periplasmic glucans (OPGs). This Rhodopseudomonas palustris (strain TIE-1) protein is Glucans biosynthesis glucosyltransferase H.